A 185-amino-acid chain; its full sequence is Adenine phosphoribosyltransferase (185 aa).

It belongs to the purine/pyrimidine phosphoribosyltransferase family. As to quaternary structure, homodimer.

The protein resides in the cytoplasm. It carries out the reaction AMP + diphosphate = 5-phospho-alpha-D-ribose 1-diphosphate + adenine. It participates in purine metabolism; AMP biosynthesis via salvage pathway; AMP from adenine: step 1/1. Catalyzes a salvage reaction resulting in the formation of AMP, that is energically less costly than de novo synthesis. In Nocardioides sp. (strain ATCC BAA-499 / JS614), this protein is Adenine phosphoribosyltransferase.